A 301-amino-acid polypeptide reads, in one-letter code: MTNVFHHVRNFIEQQPAPAKTLEKSSSPNILYTALPKHWRSNKSFQEPFYVVLLTPVPDNTEVSIWAGNDEKPCEEVRNEKAKVHRQVAKFNDLRFVGRSGRGRKFHLTIVIHSAPMMVATVKNVIKVTVDGPRDARIPKPQGSLKRQAEQQTIFPNDIIRTPGPPMPMTMIPPPWFPLPMTQTFPPSFFPLISPGPHPSISAALWKIHSESMKTPIKQKVEQENVSLNTSTCLSSPSIFITPTSDDRKLKRPSSPRSITKSSETSINLIQETPESVESKRRRNVSITSSNSSSPTIWRPF.

Residues 10–138 enclose the Runt domain; sequence NFIEQQPAPA…TVDGPRDARI (129 aa). Interaction with DNA stretches follow at residues 40–44, 95–103, and 128–137; these read RSNKS, RFVGRSGRG, and VTVDGPRDAR. R99 and V130 together coordinate chloride. Residues 237–301 form a disordered region; sequence PSIFITPTSD…SSSPTIWRPF (65 aa). A Phosphoserine modification is found at S255. Residues 255–276 show a composition bias toward polar residues; the sequence is SPRSITKSSETSINLIQETPES. The span at 285-301 shows a compositional bias: low complexity; that stretch reads VSITSSNSSSPTIWRPF.

In terms of assembly, interacts with CBFbeta homolog bro-1; acts to increase the affinity and specificity of interaction of rnt-1 with DNA. Interacts with TGF-beta pathway protein sma-4. May be ubiquitinated in order to be targeted for proteasome-mediated degradation in intestinal cells. Post-translationally, may be phosphorylated by members of the p38 MAP kinase pathway. As to expression, expressed in the intestine.

The protein localises to the nucleus. Its function is as follows. Transcription factor. Binds to regulatory DNA sequences in order to modulate transcription; negatively autoregulates its own expression, perhaps dependent upon CBF beta homolog bro-1. Promotes proliferation, and prevents differentiation, of seam cells, a stem cell-like lineage, acting in concert with bro-1. Required for controlling cell proliferation in the seam cells, perhaps by repressing expression of cyclin-dependent kinase inhibitor cki-1. Inhibition of seam cell differentiation is regulated by rnt-1 and bro-1, perhaps acting upstream of pop-1, by antagonizing pop-1 repressor function. Required for asymmetrical cell divisions in the lineage derived from a posterior embryonic seam cell, the T blast cell, and for asymmetric expression of zinc finger protein tlp-1. Regulates growth and male tail development. Involved in the oxidative stress response, perhaps downstream of the p38 MAP kinase pathway, and acting as part of a negative feedback loop via a transcriptional target gene, tyrosine-protein phosphatase vhp-1. Positively modulates dopaminergic signaling in a non-cell autonomous manner. May be involved in TGF-beta signaling. The polypeptide is Runt-related transcription factor rnt-1 (Caenorhabditis elegans).